The primary structure comprises 525 residues: GMP synthase [glutamine-hydrolyzing] (525 aa).

In terms of domain architecture, Glutamine amidotransferase type-1 spans 9 to 207 (RILILDFGSQ…VQDICGCEAL (199 aa)). The active-site Nucleophile is cysteine 86. Residues histidine 181 and glutamate 183 contribute to the active site. Positions 208-400 (WTASNIVEDA…LGLPYDMVYR (193 aa)) constitute a GMPS ATP-PPase domain. 235 to 241 (SGGVDSS) lines the ATP pocket.

In terms of assembly, homodimer.

It catalyses the reaction XMP + L-glutamine + ATP + H2O = GMP + L-glutamate + AMP + diphosphate + 2 H(+). It functions in the pathway purine metabolism; GMP biosynthesis; GMP from XMP (L-Gln route): step 1/1. Functionally, catalyzes the synthesis of GMP from XMP. In Pseudomonas entomophila (strain L48), this protein is GMP synthase [glutamine-hydrolyzing].